A 21-amino-acid polypeptide reads, in one-letter code: Cupiennin-6b (21 aa).

Ser21 is modified (serine amide).

In terms of tissue distribution, expressed by the venom gland.

Its subcellular location is the secreted. This Cupiennius salei (American wandering spider) protein is Cupiennin-6b.